The primary structure comprises 499 residues: Lysine--tRNA ligase (499 aa).

Residues E408 and E415 each coordinate Mg(2+).

It belongs to the class-II aminoacyl-tRNA synthetase family. In terms of assembly, homodimer. Mg(2+) is required as a cofactor.

The protein resides in the cytoplasm. The enzyme catalyses tRNA(Lys) + L-lysine + ATP = L-lysyl-tRNA(Lys) + AMP + diphosphate. The polypeptide is Lysine--tRNA ligase (Bacillus mycoides (strain KBAB4) (Bacillus weihenstephanensis)).